The sequence spans 473 residues: Adenosylhomocysteinase (473 aa).

Substrate-binding residues include T64, D139, and E199. 200 to 202 (TTT) is an NAD(+) binding site. Positions 229 and 233 each coordinate substrate. NAD(+)-binding positions include N234, 263–268 (GYGDVG), E286, N321, 342–344 (IGH), and N387.

Belongs to the adenosylhomocysteinase family. NAD(+) serves as cofactor.

It is found in the cytoplasm. It catalyses the reaction S-adenosyl-L-homocysteine + H2O = L-homocysteine + adenosine. The protein operates within amino-acid biosynthesis; L-homocysteine biosynthesis; L-homocysteine from S-adenosyl-L-homocysteine: step 1/1. May play a key role in the regulation of the intracellular concentration of adenosylhomocysteine. The protein is Adenosylhomocysteinase of Paraburkholderia xenovorans (strain LB400).